The primary structure comprises 160 residues: Transcription elongation factor GreA (160 aa).

Residues Glu-12 to Ser-76 are a coiled coil.

It belongs to the GreA/GreB family.

Necessary for efficient RNA polymerase transcription elongation past template-encoded arresting sites. The arresting sites in DNA have the property of trapping a certain fraction of elongating RNA polymerases that pass through, resulting in locked ternary complexes. Cleavage of the nascent transcript by cleavage factors such as GreA or GreB allows the resumption of elongation from the new 3'terminus. GreA releases sequences of 2 to 3 nucleotides. This chain is Transcription elongation factor GreA, found in Clostridium botulinum (strain Kyoto / Type A2).